A 212-amino-acid polypeptide reads, in one-letter code: Noggin-2 (212 aa).

An N-terminal signal peptide occupies residues M1–S23. The disordered stretch occupies residues L37 to D56. A compositionally biased stretch (basic and acidic residues) spans D47–D56. A glycan (N-linked (GlcNAc...) asparagine) is linked at N84.

It belongs to the noggin family. Homodimer; disulfide-linked.

The protein localises to the secreted. Inhibitor of bone morphogenetic proteins (BMP) signaling. This chain is Noggin-2 (nog2), found in Danio rerio (Zebrafish).